The chain runs to 348 residues: D-alanine--D-alanine ligase (348 aa).

Residues lysine 132–arginine 334 enclose the ATP-grasp domain. Glutamate 162–glutamate 217 contacts ATP. The Mg(2+) site is built by aspartate 288, glutamate 301, and asparagine 303.

This sequence belongs to the D-alanine--D-alanine ligase family. Mg(2+) serves as cofactor. The cofactor is Mn(2+).

Its subcellular location is the cytoplasm. It carries out the reaction 2 D-alanine + ATP = D-alanyl-D-alanine + ADP + phosphate + H(+). The protein operates within cell wall biogenesis; peptidoglycan biosynthesis. Its function is as follows. Cell wall formation. In Streptococcus equi subsp. zooepidemicus (strain H70), this protein is D-alanine--D-alanine ligase.